Reading from the N-terminus, the 437-residue chain is Homogentisate 1,2-dioxygenase (437 aa).

The segment at 15-34 (NEHATSDPRVPDALPVGQNS) is disordered. Fe cation-binding residues include histidine 336, glutamate 342, and histidine 372.

Belongs to the homogentisate dioxygenase family. Fe cation is required as a cofactor. Expressed in the hypodermis and intestine.

It catalyses the reaction homogentisate + O2 = 4-maleylacetoacetate + H(+). It functions in the pathway amino-acid degradation; L-phenylalanine degradation; acetoacetate and fumarate from L-phenylalanine: step 4/6. Its function is as follows. Plays a role in the tyrosine degradation pathway. The chain is Homogentisate 1,2-dioxygenase from Caenorhabditis elegans.